Reading from the N-terminus, the 791-residue chain is Phenylalanine--tRNA ligase beta subunit (791 aa).

A tRNA-binding domain is found at 39 to 148 (AADFSGVVVA…ADAPVGADIR (110 aa)). Positions 401–476 (PLRAPVRLRE…RVYGYDAIPR (76 aa)) constitute a B5 domain. Mg(2+)-binding residues include Asp454, Asp460, Glu463, and Glu464. Positions 697–790 (SRFPLVRRDL…LAADFGAKLR (94 aa)) constitute an FDX-ACB domain.

It belongs to the phenylalanyl-tRNA synthetase beta subunit family. Type 1 subfamily. As to quaternary structure, tetramer of two alpha and two beta subunits. Mg(2+) is required as a cofactor.

It is found in the cytoplasm. The catalysed reaction is tRNA(Phe) + L-phenylalanine + ATP = L-phenylalanyl-tRNA(Phe) + AMP + diphosphate + H(+). This is Phenylalanine--tRNA ligase beta subunit from Methylococcus capsulatus (strain ATCC 33009 / NCIMB 11132 / Bath).